A 193-amino-acid polypeptide reads, in one-letter code: Spermatogenesis-associated protein 3 (193 aa).

A compositionally biased stretch (basic residues) spans 1 to 16; it reads MKKVKKKKSDSRRRRN. The tract at residues 1-92 is disordered; sequence MKKVKKKKSD…SPFLVPMEPK (92 aa). Residues 17 to 35 show a composition bias toward low complexity; sequence SISPQTSSDSSQQPSSETP. Pro residues predominate over residues 36 to 48; it reads PSCPEPASPPSKP.

Strongly expressed in testis. Faintly expressed in epididymis, ovary, spleen, kidney, lung, heart, brain, epididymis, liver and skeletal muscle.

Its subcellular location is the cell projection. It is found in the cilium. The protein resides in the flagellum. This Mus musculus (Mouse) protein is Spermatogenesis-associated protein 3 (Spata3).